Here is a 214-residue protein sequence, read N- to C-terminus: Glutathione S-transferase 1 (214 aa).

One can recognise a GST N-terminal domain in the interval 2-83; that stretch reads APMKLYGAVM…YAARKNKPEL (82 aa). Residues S12, 41 to 42, 54 to 55, and 67 to 68 each bind glutathione; these read HK, QV, and ES. In terms of domain architecture, GST C-terminal spans 88–214; it reads NLEEAAMVDV…KVAALMKPSA (127 aa).

Belongs to the GST superfamily. Phi family. Homodimer or heterodimer of GST-I and GST-IV (=GST-II). Expressed in the stem and leaves, lower levels are seen in the pollen and endosperm.

It catalyses the reaction RX + glutathione = an S-substituted glutathione + a halide anion + H(+). In terms of biological role, conjugation of reduced glutathione to a wide number of exogenous and endogenous hydrophobic electrophiles. Involved in the detoxification of certain herbicides. In Zea mays (Maize), this protein is Glutathione S-transferase 1 (GST1).